The chain runs to 273 residues: 3-methyl-2-oxobutanoate hydroxymethyltransferase (273 aa).

2 residues coordinate Mg(2+): aspartate 41 and aspartate 80. 3-methyl-2-oxobutanoate is bound by residues 41 to 42, aspartate 80, and lysine 110; that span reads DS. Glutamate 112 is a Mg(2+) binding site. Residue glutamate 180 is the Proton acceptor of the active site.

The protein belongs to the PanB family. As to quaternary structure, homodecamer; pentamer of dimers. Mg(2+) serves as cofactor.

The protein resides in the cytoplasm. The catalysed reaction is 3-methyl-2-oxobutanoate + (6R)-5,10-methylene-5,6,7,8-tetrahydrofolate + H2O = 2-dehydropantoate + (6S)-5,6,7,8-tetrahydrofolate. It functions in the pathway cofactor biosynthesis; (R)-pantothenate biosynthesis; (R)-pantoate from 3-methyl-2-oxobutanoate: step 1/2. Its function is as follows. Catalyzes the reversible reaction in which hydroxymethyl group from 5,10-methylenetetrahydrofolate is transferred onto alpha-ketoisovalerate to form ketopantoate. The sequence is that of 3-methyl-2-oxobutanoate hydroxymethyltransferase from Deinococcus geothermalis (strain DSM 11300 / CIP 105573 / AG-3a).